Here is a 480-residue protein sequence, read N- to C-terminus: O-acyltransferase ausP (480 aa).

Residues His-180 and Asp-412 each act as proton acceptor in the active site.

Belongs to the plant acyltransferase family. As to quaternary structure, monomer.

It functions in the pathway secondary metabolite biosynthesis; terpenoid biosynthesis. Its function is as follows. O-acyltransferase; part of the gene cluster that mediates the biosynthesis of calidodehydroaustin, a fungal meroterpenoid. The first step of the pathway is the synthesis of 3,5-dimethylorsellinic acid by the polyketide synthase ausA. 3,5-dimethylorsellinic acid is then prenylated by the polyprenyl transferase ausN. Further epoxidation by the FAD-dependent monooxygenase ausM and cyclization by the probable terpene cyclase ausL lead to the formation of protoaustinoid A. Protoaustinoid A is then oxidized to spiro-lactone preaustinoid A3 by the combined action of the FAD-binding monooxygenases ausB and ausC, and the dioxygenase ausE. Acid-catalyzed keto-rearrangement and ring contraction of the tetraketide portion of preaustinoid A3 by ausJ lead to the formation of preaustinoid A4. The aldo-keto reductase ausK, with the help of ausH, is involved in the next step by transforming preaustinoid A4 into isoaustinone which is in turn hydroxylated by the P450 monooxygenase ausI to form austinolide. The cytochrome P450 monooxygenase ausG modifies austinolide to austinol. Austinol is further acetylated to austin by the O-acetyltransferase ausP, which spontaneously changes to dehydroaustin. The cytochrome P450 monooxygenase ausR then converts dehydroaustin is into 7-dehydrodehydroaustin. The hydroxylation catalyzed by ausR permits the O-acetyltransferase ausQ to add an additional acetyl group to the molecule, leading to the formation of acetoxydehydroaustin. The short chain dehydrogenase ausT catalyzes the reduction of the double bond present between carbon atoms 1 and 2 to convert 7-dehydrodehydroaustin into 1,2-dihydro-7-hydroxydehydroaustin. AusQ catalyzes not only an acetylation reaction but also the addition of the PKS ausV diketide product to 1,2-dihydro-7-hydroxydehydroaustin, forming precalidodehydroaustin. Finally, the iron/alpha-ketoglutarate-dependent dioxygenase converts precalidodehydroaustin into calidodehydroaustin. The polypeptide is O-acyltransferase ausP (Aspergillus calidoustus).